Consider the following 196-residue polypeptide: Carnitine operon protein CaiE (196 aa).

The disordered stretch occupies residues 173–196 (TQPLRQMEENRPRLQGTTDVTPKR). Positions 187–196 (QGTTDVTPKR) are enriched in polar residues.

The protein belongs to the transferase hexapeptide repeat family.

It functions in the pathway amine and polyamine metabolism; carnitine metabolism. Its function is as follows. Overproduction of CaiE stimulates the activity of CaiB and CaiD. The polypeptide is Carnitine operon protein CaiE (Escherichia coli O7:K1 (strain IAI39 / ExPEC)).